We begin with the raw amino-acid sequence, 171 residues long: MSAPPPLQIREANAHLAAVHRRAAELERRLLAAERTMRAQAERLACQDQQLRAALDELGRAKDREIFTLQEQLLSSEATVRSLQAAVEQRDQMIQELQPRADLLQDITRQRPPLAALLATLEEAEELGPLPSSHSHGAQLLPDGPGPPLGNSMREEEGQDDQQPAVFGTTV.

A coiled-coil region spans residues 7-98 (LQIREANAHL…QRDQMIQELQ (92 aa)). The segment at 126–171 (ELGPLPSSHSHGAQLLPDGPGPPLGNSMREEEGQDDQQPAVFGTTV) is disordered.

Expressed in brain, heart, kidney, liver, lung, skeletal muscle, spleen and testis. Within the kidney expression is pronounced within glomeruli.

The protein resides in the cytoplasm. This Rattus norvegicus (Rat) protein is Vimentin-type intermediate filament-associated coiled-coil protein (Vmac).